The chain runs to 144 residues: MLLPKRVKYRRQHRPKTTGRSKGGNFVTFGEYGLQAITTSWITSRQIESARIAMTRYMKRGGKVWIKIFPHTPYTKKPLEVRMGAGKGAVEGWIAVVKPGRILFEVAGVSEEVAREALRLASHKLPVKTKFVKREELGGESNES.

Positions 1–19 (MLLPKRVKYRRQHRPKTTG) are enriched in basic residues. Positions 1–23 (MLLPKRVKYRRQHRPKTTGRSKG) are disordered.

The protein belongs to the universal ribosomal protein uL16 family. In terms of assembly, part of the 50S ribosomal subunit.

In terms of biological role, binds 23S rRNA and is also seen to make contacts with the A and possibly P site tRNAs. This is Large ribosomal subunit protein uL16 from Staphylococcus carnosus (strain TM300).